The sequence spans 124 residues: KETAAAKFERQHMDSSTSSASSSNYCNQMMKSRSMTQNRCKPVBTFVHZSLABVQAVCSZKBVACKBGZTBCYZSYSTMSITBCRZTGSSKYPBCAYTTTZAKKHIIVACZGBPYVPVHFBASV.

The span at 1–13 (KETAAAKFERQHM) shows a compositional bias: basic and acidic residues. Positions 1–24 (KETAAAKFERQHMDSSTSSASSSN) are disordered. Substrate-binding residues include Lys7 and Arg10. His12 (proton acceptor) is an active-site residue. 4 disulfides stabilise this stretch: Cys26–Cys84, Cys40–Cys95, Cys58–Cys110, and Cys65–Cys72. Substrate contacts are provided by residues 41–45 (KPVBT), Lys66, and Arg85. His119 serves as the catalytic Proton donor.

It belongs to the pancreatic ribonuclease family. In terms of assembly, monomer. Interacts with and forms tight 1:1 complexes with RNH1. Dimerization of two such complexes may occur. Interaction with RNH1 inhibits this protein. In terms of tissue distribution, pancreas.

It localises to the secreted. The enzyme catalyses an [RNA] containing cytidine + H2O = an [RNA]-3'-cytidine-3'-phosphate + a 5'-hydroxy-ribonucleotide-3'-[RNA].. It carries out the reaction an [RNA] containing uridine + H2O = an [RNA]-3'-uridine-3'-phosphate + a 5'-hydroxy-ribonucleotide-3'-[RNA].. Endonuclease that catalyzes the cleavage of RNA on the 3' side of pyrimidine nucleotides. Acts on single-stranded and double-stranded RNA. This Boselaphus tragocamelus (Nilgai) protein is Ribonuclease pancreatic (RNASE1).